The following is a 609-amino-acid chain: Probable ubiquitin-conjugating enzyme E2 25 (609 aa).

2 disordered regions span residues 70–99 and 151–185; these read EEDE…LDPE and ADKE…SQFS. Residues 156-178 show a composition bias toward low complexity; the sequence is ASSSKSSHANNGNNSSKKATKAS. The UBC core domain occupies 332–492; sequence DWAKRIQDEW…TFILSLKTMV (161 aa). Catalysis depends on Cys418, which acts as the Glycyl thioester intermediate.

This sequence belongs to the ubiquitin-conjugating enzyme family. As to expression, expressed in seeds, pistils, siliques, hypocotyls and leaves.

It carries out the reaction S-ubiquitinyl-[E1 ubiquitin-activating enzyme]-L-cysteine + [E2 ubiquitin-conjugating enzyme]-L-cysteine = [E1 ubiquitin-activating enzyme]-L-cysteine + S-ubiquitinyl-[E2 ubiquitin-conjugating enzyme]-L-cysteine.. The protein operates within protein modification; protein ubiquitination. Functionally, accepts the ubiquitin from the E1 complex and catalyzes its covalent attachment to other proteins. In Arabidopsis thaliana (Mouse-ear cress), this protein is Probable ubiquitin-conjugating enzyme E2 25 (UBC25).